Here is a 283-residue protein sequence, read N- to C-terminus: MMDQTVSNNFKMIYIASCGEGINAFHLVESTLVQFPDSDITVVKVPHIRTESQVDHLLDRVKDVESLIAHTIVEPNLRQYLVTKAEEHKIVTIDLMGQVLNKIETFLSIRPLGKPGLYRETHQVDLKQVTAIDFALAHDDGLRPESLDEAEIILVGLSRAGKTPLSMYMGVMGWKVANIPYVPGVPMPQTLDEVDRRRVIALNINIEQLLSHRKMRQESLGTSDMHAYSRRQEVEVEVQTAQKYYITKGFSMIDVSNKPIETSAEEIAEMITRRFKAQAHLKD.

Residue 156 to 163 (GLSRAGKT) participates in ADP binding.

This sequence belongs to the pyruvate, phosphate/water dikinase regulatory protein family. PDRP subfamily.

It catalyses the reaction N(tele)-phospho-L-histidyl/L-threonyl-[pyruvate, phosphate dikinase] + ADP = N(tele)-phospho-L-histidyl/O-phospho-L-threonyl-[pyruvate, phosphate dikinase] + AMP + H(+). The catalysed reaction is N(tele)-phospho-L-histidyl/O-phospho-L-threonyl-[pyruvate, phosphate dikinase] + phosphate + H(+) = N(tele)-phospho-L-histidyl/L-threonyl-[pyruvate, phosphate dikinase] + diphosphate. Bifunctional serine/threonine kinase and phosphorylase involved in the regulation of the pyruvate, phosphate dikinase (PPDK) by catalyzing its phosphorylation/dephosphorylation. This chain is Putative pyruvate, phosphate dikinase regulatory protein, found in Desulfotalea psychrophila (strain LSv54 / DSM 12343).